The following is a 637-amino-acid chain: Sodium-dependent proline transporter (637 aa).

Topologically, residues 1–45 (MKKLQEAHLRKPVTPDLLMTPSDQGDVDLDVDFAADRGNWTGKLD) are cytoplasmic. Threonine 20 is subject to Phosphothreonine. Serine 22 is modified (phosphoserine). Transmembrane regions (helical) follow at residues 46–66 (FLLS…FPYR), 74–93 (AFLV…LFFL), and 117–137 (GAGA…NMII). The Extracellular portion of the chain corresponds to 138-214 (AYVLFYLFAS…QGIGRPGEIR (77 aa)). An N-linked (GlcNAc...) asparagine glycan is attached at asparagine 182. The next 9 helical transmembrane spans lie at 215–233 (WNLC…LCIL), 242–259 (VVYF…MLLV), 295–312 (IFYS…FASY), 324–345 (FIVT…FSVL), 378–397 (LPLS…TLGL), 425–443 (VFSG…ILTT), 459–479 (SFGL…VYGI), 500–519 (ACWL…YSIV), and 538–556 (LGIL…GMLV). Residues 557 to 637 (AVLREEGSLW…IAEEEEESMM (81 aa)) are Cytoplasmic-facing. A phosphoserine mark is found at serine 573 and serine 582. Threonine 588 is subject to Phosphothreonine. Tyrosine 591 is subject to Phosphotyrosine. Residues serine 598 and serine 600 each carry the phosphoserine modification.

This sequence belongs to the sodium:neurotransmitter symporter (SNF) (TC 2.A.22) family. SLC6A7 subfamily. As to expression, expressed in subpopulations of putative glutamatergic pathways of rat brain.

The protein resides in the synaptic cell membrane. It catalyses the reaction L-proline(out) + chloride(out) + 2 Na(+)(out) = L-proline(in) + chloride(in) + 2 Na(+)(in). The catalysed reaction is L-pipecolate(out) + chloride(out) + 2 Na(+)(out) = L-pipecolate(in) + chloride(in) + 2 Na(+)(in). Its function is as follows. Brain specific sodium (and chloride)-dependent proline transporter. Terminates the action of proline by its high affinity sodium-dependent reuptake into presynaptic terminals. This chain is Sodium-dependent proline transporter (Slc6a7), found in Rattus norvegicus (Rat).